The following is a 124-amino-acid chain: Small ribosomal subunit protein uS13 (124 aa).

Positions 89-124 (GRRHRQGLPVRGQRTKTNARTRKGPKRTVAGKKKAK) are disordered. Residues 101 to 124 (QRTKTNARTRKGPKRTVAGKKKAK) are compositionally biased toward basic residues.

This sequence belongs to the universal ribosomal protein uS13 family. As to quaternary structure, part of the 30S ribosomal subunit. Forms a loose heterodimer with protein S19. Forms two bridges to the 50S subunit in the 70S ribosome.

In terms of biological role, located at the top of the head of the 30S subunit, it contacts several helices of the 16S rRNA. In the 70S ribosome it contacts the 23S rRNA (bridge B1a) and protein L5 of the 50S subunit (bridge B1b), connecting the 2 subunits; these bridges are implicated in subunit movement. Contacts the tRNAs in the A and P-sites. The polypeptide is Small ribosomal subunit protein uS13 (Nocardioides sp. (strain ATCC BAA-499 / JS614)).